The following is a 1657-amino-acid chain: Putative serine/threonine-protein kinase/receptor R826 (1657 aa).

The N-terminal stretch at 1–23 (MRLNSQIVFCIVVVISCLSMIEC) is a signal peptide. Residues Asn-153, Asn-178, Asn-238, Asn-255, Asn-352, Asn-454, Asn-476, Asn-494, and Asn-596 are each glycosylated (N-linked (GlcNAc...) asparagine; by host). The chain crosses the membrane as a helical span at residues 742–762 (IILAVVIPIAFIIVCIICILV). In terms of domain architecture, Protein kinase 1 spans 786–1049 (LELGEQLGTG…EIMTRLSNLM (264 aa)). Residues 792-800 (LGTGAFGEV) and Lys-813 each bind ATP. Asp-909 (proton acceptor) is an active-site residue. A disordered region spans residues 1089 to 1115 (VQNSYNRTDSYDLGSNNSHSSITSDTN). The 144-residue stretch at 1134–1277 (VVVFTDIISA…PTVTTAAAVT (144 aa)) folds into the Guanylate cyclase domain. The 253-residue stretch at 1399–1651 (IKMGEQIGLG…DDVIIVLAKF (253 aa)) folds into the Protein kinase 2 domain. ATP is bound by residues 1405 to 1413 (IGLGSYGVV) and Lys-1426. Asp-1522 acts as the Proton acceptor in catalysis.

The protein resides in the membrane. It carries out the reaction L-seryl-[protein] + ATP = O-phospho-L-seryl-[protein] + ADP + H(+). The enzyme catalyses L-threonyl-[protein] + ATP = O-phospho-L-threonyl-[protein] + ADP + H(+). The sequence is that of Putative serine/threonine-protein kinase/receptor R826 from Acanthamoeba polyphaga mimivirus (APMV).